A 526-amino-acid polypeptide reads, in one-letter code: Protein translocase subunit SecD (526 aa).

Transmembrane regions (helical) follow at residues 8–28 (LIVF…SLLE), 356–376 (IIAL…YYSM), 379–399 (VIAC…MAIF), 405–425 (LPGM…NIII), 453–473 (AIFD…AYGT), and 478–498 (GFAL…IIGT).

It belongs to the SecD/SecF family. SecD subfamily. Forms a complex with SecF. Part of the essential Sec protein translocation apparatus which comprises SecA, SecYEG and auxiliary proteins SecDF-YajC and YidC.

It localises to the cell inner membrane. In terms of biological role, part of the Sec protein translocase complex. Interacts with the SecYEG preprotein conducting channel. SecDF uses the proton motive force (PMF) to complete protein translocation after the ATP-dependent function of SecA. The chain is Protein translocase subunit SecD from Helicobacter pylori (strain J99 / ATCC 700824) (Campylobacter pylori J99).